The following is a 511-amino-acid chain: Xylose import ATP-binding protein XylG (511 aa).

2 ABC transporter domains span residues 6–244 (LEMR…VGRE) and 261–506 (FEAR…IGKP).

It belongs to the ABC transporter superfamily. Xylose importer (TC 3.A.1.2.4) family. The complex is composed of two ATP-binding proteins (XylG), two transmembrane proteins (XylH) and a solute-binding protein (XylF).

It localises to the cell inner membrane. The enzyme catalyses D-xylose(out) + ATP + H2O = D-xylose(in) + ADP + phosphate + H(+). Part of the ABC transporter complex XylFGH involved in xylose import. Responsible for energy coupling to the transport system. The polypeptide is Xylose import ATP-binding protein XylG (Brucella melitensis biotype 1 (strain ATCC 23456 / CCUG 17765 / NCTC 10094 / 16M)).